The chain runs to 228 residues: Urease accessory protein UreF (228 aa).

This sequence belongs to the UreF family. In terms of assembly, ureD, UreF and UreG form a complex that acts as a GTP-hydrolysis-dependent molecular chaperone, activating the urease apoprotein by helping to assemble the nickel containing metallocenter of UreC. The UreE protein probably delivers the nickel.

It localises to the cytoplasm. Its function is as follows. Required for maturation of urease via the functional incorporation of the urease nickel metallocenter. This Prochlorococcus marinus (strain AS9601) protein is Urease accessory protein UreF.